The following is a 1360-amino-acid chain: KN motif and ankyrin repeat domains 1 (1360 aa).

A KN motif; Interaction with TLN1 region spans residues 30-68 (PYFVETPYGFQLDLDFVKYVDDIQKGNTIKKLNIQKRRK). An Important for binding to TLN1 motif is present at residues 41-44 (LDLD). Positions 43-52 (LDFVKYVDDI) match the Nuclear export signal 1 (NES 1) motif. The Nuclear localization signal 1 (NLS 1) motif lies at 65-68 (KRRK). The segment at 66–103 (RRKPSVPCPEVRAIPGHQGVWTSTESLSSSNSDDSKQC) is disordered. Low complexity predominate over residues 88 to 103 (STESLSSSNSDDSKQC). Positions 125-134 (LETSPTFAVS) match the Nuclear export signal 2 (NES 2) motif. Position 186 is a phosphoserine (serine 186). The disordered stretch occupies residues 221-253 (DYNSYVPAAPTTSSMGSSVRHSPLSSGISTPVT). Residues 230-253 (PTTSSMGSSVRHSPLSSGISTPVT) are compositionally biased toward polar residues. The interaction with PPFIBP1 stretch occupies residues 244–339 (LSSGISTPVT…SQLELLARAR (96 aa)). The stretch at 260 to 311 (LQHIREQMAIALKRLKELEEQVRTIPVLQVKISVLQEEKRQLASQLKSQRAS) forms a coiled coil. At serine 325 the chain carries Phosphoserine. Coiled coils occupy residues 367-394 (FRQLTADMQALERKIQDSSCEVASELRE) and 453-487 (ITEADKEIELQQQTIEALKEKIYRLEVQLKETTHD). The short motif at 618–627 (LTLLKTNLNL) is the Nuclear export signal 3 (NES 3) element. Disordered regions lie at residues 929–954 (SQPEVEAETAEGKHSRGHEQFPMQGS) and 983–1053 (IMKK…DTRG). Composition is skewed to basic and acidic residues over residues 938-947 (AEGKHSRGHE) and 985-995 (KKSDGNKDSNG). The Nuclear localization signal 2 (NLS 2) motif lies at 985 to 998 (KKSDGNKDSNGAKK). Over residues 1010-1025 (ETTSSDESSSDGSSSS) the composition is skewed to low complexity. Residues 1026 to 1047 (ESDDECDTIGYPPEEEEEEEEK) show a composition bias toward acidic residues. The interval 1081-1360 (EPEKEEIRER…PGPTHRGSFD (280 aa)) is interaction with KIF21A. Residues 1117–1154 (KDMRICLNTLQHDWFRVSSQKSAVPAMVGDYIAAFEAV) form an ANK 0; degenerate repeat. ANK repeat units follow at residues 1169-1199 (NGNTALHYSVSHSNFQIVKLLLDADVCNVDH), 1203-1236 (AGYTPIMLAALAAVEAEKDMQVVEELFSCGDVNA), 1241-1270 (AGQTALMLAVSHGRIDMVKGLLACGADVNI), 1274-1306 (EGSTALMCASEHGHVEIVKLLLAQPGCNGHLED), and 1308-1337 (DGSTALSIALEAGHKDIAVLLYAHLNFSKA). The disordered stretch occupies residues 1337 to 1360 (AQSPSTPRLGRKTSPGPTHRGSFD).

Part of a cortical microtubule stabilization complex (CMSC) composed of KANK1, PPFIA1, PPFIBP1, ERC1/ELKS, PHLDB2/LL5beta, CLASPs, KIF21A and possibly additional interactors; within CMSCs KANK1 and PHLDB2/LL5beta appear to be the core components for targeting of microtubule-binding proteins KIF21A and CLASPs, whereas PPFIA1, PPFIBP1 and ERC1/ELKS serve as scaffolds for protein clustering. Interacts (via KN motif) with TLN1 (via R7 domain); this mediates CMSC clustering around focal adhesions. Interacts (via CC1 domain, residues 244-339) with PPFIBP1. Interacts (via ANK repeats 1-5) with KIF21A (via residues 1142-1169). Interacts with YWHAQ; the interaction requires KANK1 phosphorylation at Ser-325 and is enhanced by growth factor stimulation. Interacts with YWHAB, YWHAG, YWHAE, YWHAH, YWHAZ and SFN; the interaction requires KANK1 phosphorylation at Ser-325. Interacts with ARFGEF1; however, colocalization cannot be experimentally confirmed. Interacts with BAIAP2. Interacts with CTNNB1. Interacts (via coiled coil domain) with DAAM1 (via coiled coil domain).

The protein resides in the cytoplasm. Its subcellular location is the cell cortex. It localises to the cell projection. The protein localises to the ruffle membrane. It is found in the nucleus. In terms of biological role, adapter protein that links structural and signaling protein complexes positioned to guide microtubule and actin cytoskeleton dynamics during cell morphogenesis. At focal adhesions (FAs) rims, organizes cortical microtubule stabilizing complexes (CMSCs) and directly interacts with major FA component TLN1, forming macromolecular assemblies positioned to control microtubule-actin crosstalk at the cell edge. Recruits KIF21A in CMSCs at axonal growth cones and regulates axon guidance by suppressing microtubule growth without inducing microtubule disassembly once it reaches the cell cortex. Interacts with ARFGEF1 and participates in establishing microtubule-organizing center (MTOC) orientation and directed cell movement in wound healing. Regulates actin stress fiber formation and cell migration by inhibiting RHOA activation in response to growth factors; this function involves phosphorylation through PI3K/Akt signaling and may depend on the competitive interaction with 14-3-3 adapter proteins to sequester them from active complexes. Inhibits the formation of lamellipodia but not of filopodia; this function may depend on the competitive interaction with BAIAP2 to block its association with activated RAC1. Inhibits fibronectin-mediated cell spreading; this function is partially mediated by BAIAP2. In the nucleus, is involved in beta-catenin-dependent activation of transcription. During cell division, may regulate DAAM1-dependent RHOA activation that signals centrosome maturation and chromosomal segregation. May also be involved in contractile ring formation during cytokinesis. Potential tumor suppressor for renal cell carcinoma. This is KN motif and ankyrin repeat domains 1 from Mus musculus (Mouse).